The primary structure comprises 209 residues: rRNA N(6)-adenosine-methyltransferase METTL5 (209 aa).

S-adenosyl-L-methionine contacts are provided by residues glutamine 28, threonine 31, glycine 59, cysteine 62, valine 64, aspartate 81, and 108-109 (DV).

This sequence belongs to the methyltransferase superfamily. PrmA family. In terms of assembly, heterodimer; heterodimerizes with TRMT112. In terms of tissue distribution, expressed from very early development (8 post-conceptual weeks) and expression persists through adulthood in multiple substructures of the brain, including the cerebellar cortex, hippocampus, and striatum.

The protein localises to the nucleus. The protein resides in the presynapse. Its subcellular location is the postsynapse. It carries out the reaction adenosine(1832) in 18S rRNA + S-adenosyl-L-methionine = N(6)-methyladenosine(1832) in 18S rRNA + S-adenosyl-L-homocysteine + H(+). With respect to regulation, rRNA N6-adenosine-methyltransferase activity is inhibited by zinc. Catalytic subunit of a heterodimer with TRMT112, which specifically methylates the 6th position of adenine in position 1832 of 18S rRNA. N6-methylation of adenine(1832) in 18S rRNA resides in the decoding center of 18S rRNA and is required for translation and embryonic stem cells (ESCs) pluripotency and differentiation. This chain is rRNA N(6)-adenosine-methyltransferase METTL5, found in Homo sapiens (Human).